A 294-amino-acid chain; its full sequence is Phosphate import ATP-binding protein PstB (294 aa).

Residues 1-18 (MSETMTNQNVVNEEQPFN) show a composition bias toward polar residues. A disordered region spans residues 1-24 (MSETMTNQNVVNEEQPFNESKHRS). Positions 48-289 (LEVNKLKLFY…PSCKQTEDYI (242 aa)) constitute an ABC transporter domain. 80-87 (GPSGCGKS) contributes to the ATP binding site.

Belongs to the ABC transporter superfamily. Phosphate importer (TC 3.A.1.7) family. As to quaternary structure, the complex is composed of two ATP-binding proteins (PstB), two transmembrane proteins (PstC and PstA) and a solute-binding protein (PstS).

It is found in the cell inner membrane. The catalysed reaction is phosphate(out) + ATP + H2O = ADP + 2 phosphate(in) + H(+). In terms of biological role, part of the ABC transporter complex PstSACB involved in phosphate import. Responsible for energy coupling to the transport system. The protein is Phosphate import ATP-binding protein PstB of Hahella chejuensis (strain KCTC 2396).